Reading from the N-terminus, the 43-residue chain is Protein PsbN (43 aa).

The chain crosses the membrane as a helical span at residues 7 to 27 (VAIFISCLLVSFTGYALYTAF).

The protein belongs to the PsbN family.

The protein resides in the plastid. Its subcellular location is the chloroplast thylakoid membrane. Its function is as follows. May play a role in photosystem I and II biogenesis. This chain is Protein PsbN, found in Huperzia lucidula (Shining clubmoss).